The sequence spans 214 residues: uncharacterized protein (214 aa).

4 helical membrane passes run 43–63, 84–104, 116–136, and 150–170; these read IQKP…AAHI, IEWA…IPVI, ALVI…EYFI, and PVTR…FGIF.

Its subcellular location is the host membrane. This is an uncharacterized protein from Citrus leprosis virus C (isolate Citrus sinesis/Brazil/Cordeiropolis/2003) (CiLV-C).